Consider the following 68-residue polypeptide: Small cysteine-rich protein 2 (68 aa).

A signal peptide spans 1-24 (MAVKFHLCLLLIILVGMGAHVAFA).

Belongs to the Cnidaria small cysteine-rich protein (SCRiP) family. gamma subfamily. Post-translationally, contains 4 disulfide bonds.

Its subcellular location is the secreted. It is found in the nematocyst. In terms of biological role, induces neurotoxic symptoms on zebrafish. Has also been claimed to be implied in calcification, but tests on homolog proteins suggest that proteins of this family have a neurotoxic function and not a calcification function. The chain is Small cysteine-rich protein 2 from Orbicella faveolata (Mountainous star coral).